Reading from the N-terminus, the 242-residue chain is uncharacterized protein (242 aa).

8–15 lines the NADP(+) pocket; sequence TGASGGIG. Position 137 (Ser-137) interacts with substrate. Tyr-150 (proton acceptor) is an active-site residue.

This sequence belongs to the short-chain dehydrogenases/reductases (SDR) family.

This is an uncharacterized protein from Bacillus subtilis (strain 168).